The sequence spans 241 residues: Small ribosomal subunit protein bS6 (241 aa).

Residues 97–108 are compositionally biased toward basic residues; the sequence is KPKIRERNRKYT. The segment at 97–241 is disordered; it reads KPKIRERNRK…YNNKKPQSSN (145 aa). Residues 109-118 are compositionally biased toward basic and acidic residues; that stretch reads PRRDRFEKPN. Composition is skewed to low complexity over residues 130–151 and 161–182; these read QDQQ…QTSQ and DDFQ…NQSG. Positions 189–202 are enriched in polar residues; sequence RQNQENIHQNSKNH.

It belongs to the bacterial ribosomal protein bS6 family.

Functionally, binds together with bS18 to 16S ribosomal RNA. The sequence is that of Small ribosomal subunit protein bS6 from Mesomycoplasma hyopneumoniae (strain 232) (Mycoplasma hyopneumoniae).